A 347-amino-acid polypeptide reads, in one-letter code: N-acetyl-gamma-glutamyl-phosphate reductase (347 aa).

Cysteine 152 is a catalytic residue.

This sequence belongs to the NAGSA dehydrogenase family. Type 1 subfamily.

It localises to the cytoplasm. It carries out the reaction N-acetyl-L-glutamate 5-semialdehyde + phosphate + NADP(+) = N-acetyl-L-glutamyl 5-phosphate + NADPH + H(+). It functions in the pathway amino-acid biosynthesis; L-arginine biosynthesis; N(2)-acetyl-L-ornithine from L-glutamate: step 3/4. Its function is as follows. Catalyzes the NADPH-dependent reduction of N-acetyl-5-glutamyl phosphate to yield N-acetyl-L-glutamate 5-semialdehyde. This is N-acetyl-gamma-glutamyl-phosphate reductase from Neisseria meningitidis serogroup A / serotype 4A (strain DSM 15465 / Z2491).